The sequence spans 343 residues: Aspartate carbamoyltransferase catalytic subunit (343 aa).

2 residues coordinate carbamoyl phosphate: Arg91 and Thr92. Position 119 (Lys119) interacts with L-aspartate. The carbamoyl phosphate site is built by Arg141, His171, and Gln174. L-aspartate is bound by residues Arg204 and Arg259. Carbamoyl phosphate-binding residues include Gly300 and Pro301.

It belongs to the aspartate/ornithine carbamoyltransferase superfamily. ATCase family. In terms of assembly, heterododecamer (2C3:3R2) of six catalytic PyrB chains organized as two trimers (C3), and six regulatory PyrI chains organized as three dimers (R2).

It carries out the reaction carbamoyl phosphate + L-aspartate = N-carbamoyl-L-aspartate + phosphate + H(+). It participates in pyrimidine metabolism; UMP biosynthesis via de novo pathway; (S)-dihydroorotate from bicarbonate: step 2/3. Catalyzes the condensation of carbamoyl phosphate and aspartate to form carbamoyl aspartate and inorganic phosphate, the committed step in the de novo pyrimidine nucleotide biosynthesis pathway. This is Aspartate carbamoyltransferase catalytic subunit from Burkholderia thailandensis (strain ATCC 700388 / DSM 13276 / CCUG 48851 / CIP 106301 / E264).